The following is a 2472-amino-acid chain: Spectrin alpha chain, non-erythrocytic 1 (2472 aa).

The residue at position 1 (Met-1) is an N-acetylmethionine. Spectrin repeat units lie at residues 45-146 (RFQF…IKLL), 150-251 (KLVQ…QGKL), 256-358 (EVQR…ARLN), 361-465 (YRLQ…QYEQ), 468-570 (DLQL…AQLA), 574-676 (HLQQ…KLRE), 679-781 (QQQQ…QKLA), 785-888 (RLQQ…DLED), and 891-969 (QAQQ…ETGK). Ser-587 is subject to Phosphoserine. Residue Lys-637 is modified to N6-acetyllysine. Lys-803 carries the N6-acetyllysine modification. 6 positions are modified to phosphoserine: Ser-924, Ser-982, Ser-999, Ser-1029, Ser-1031, and Ser-1041. In terms of domain architecture, SH3 spans 967 to 1026 (TGKELVLALYDYQEKSPREVTMKKGDILTLLNSTNKDWWKVEVNDRQGFVPAAYVKKLDP). Residues 1096–1166 (LFREANELQQ…LESEGLMAEE (71 aa)) form a Spectrin 10 repeat. Tyr-1176 carries the phosphotyrosine modification. A phosphoserine mark is found at Ser-1190, Ser-1207, Ser-1217, Ser-1291, Ser-1306, Ser-1323, and Ser-1338. The Spectrin 11 repeat unit spans residues 1233–1336 (HEVQRFHRDA…RADQRKAKLG (104 aa)). Spectrin repeat units follow at residues 1339 to 1442 (HDLQ…MMLD) and 1446 to 1549 (ELQL…KLGE). The residue at position 1519 (Lys-1519) is an N6-acetyllysine. Phosphoserine is present on residues Ser-1550, Ser-1557, Ser-1578, Ser-1615, and Ser-1647. Spectrin repeat units follow at residues 1552-1656 (TLQQ…KLKE), 1659-1762 (KQQN…KLNE), 1764-1868 (HRLH…RLEE), 1871-1974 (EYQQ…KLDE), 1978-2081 (FLQF…KLLE), 2092-2194 (LFLT…LELQ), and 2206-2310 (LRQE…NLEQ). Thr-2020 is modified (phosphothreonine). N6-acetyllysine is present on Lys-2052. EF-hand domains are found at residues 2323–2358 (EALK…LGYD), 2366–2401 (EPDP…RETE), and 2404–2439 (KSSE…EQAD). Ca(2+) contacts are provided by Asp-2336, Asp-2338, Ser-2340, Arg-2342, Glu-2347, Asp-2379, Asn-2381, Asp-2383, His-2385, and Glu-2390. Lys-2421 is modified (N6-acetyllysine).

It belongs to the spectrin family. In terms of assembly, like erythrocyte spectrin, the spectrin-like proteins are capable of forming dimers which can further associate to tetramers. Interacts (via C-terminal spectrin repeats) with TRPC4. Interacts with CALM and EMD. Interacts with isoform 1 of ACP1. Identified in a complex with ACTN4, CASK, IQGAP1, MAGI2, NPHS1 and SPTBN1. Interacts with SHANK3 (via ANK repeats). Interacts with CLN3; this interaction regulates the fodrin localization at the plasma membrane. Phosphorylation of Tyr-1176 decreases sensitivity to cleavage by calpain in vitro.

Its subcellular location is the cytoplasm. It is found in the cytoskeleton. The protein localises to the cell cortex. Its function is as follows. Fodrin, which seems to be involved in secretion, interacts with calmodulin in a calcium-dependent manner and is thus candidate for the calcium-dependent movement of the cytoskeleton at the membrane. The polypeptide is Spectrin alpha chain, non-erythrocytic 1 (SPTAN1) (Homo sapiens (Human)).